A 201-amino-acid chain; its full sequence is Ribonuclease HII (201 aa).

An RNase H type-2 domain is found at 12–201; that stretch reads DLVAGVDEVG…VRELLDASVE (190 aa). A divalent metal cation-binding residues include aspartate 18, glutamate 19, and aspartate 110.

This sequence belongs to the RNase HII family. Requires Mn(2+) as cofactor. Mg(2+) is required as a cofactor.

It localises to the cytoplasm. It catalyses the reaction Endonucleolytic cleavage to 5'-phosphomonoester.. Endonuclease that specifically degrades the RNA of RNA-DNA hybrids. This Pseudomonas paraeruginosa (strain DSM 24068 / PA7) (Pseudomonas aeruginosa (strain PA7)) protein is Ribonuclease HII.